Consider the following 502-residue polypeptide: Sporulation-specific protein 2 (502 aa).

The first 56 residues, 1-56 (MPIWKTQTFFTSISVIQIVNKETKVSTKKEKDSMLNQLNTILRFLFLFLQLIKSSA), serve as a signal peptide directing secretion. 7 N-linked (GlcNAc...) asparagine glycosylation sites follow: Asn-77, Asn-135, Asn-285, Asn-303, Asn-340, Asn-343, and Asn-355. Positions 441–474 (EGNVLGKQETDNDNGKKEKGKNGAKSQGSSKKME) are disordered. A compositionally biased stretch (basic and acidic residues) spans 448-461 (QETDNDNGKKEKGK). Asn-475 carries the GPI-anchor amidated asparagine lipid modification. The propeptide at 476–502 (SAPKNIFIDAFKMSVYAVFTVLFSIIF) is removed in mature form.

This sequence belongs to the SPS2 family.

It is found in the cell membrane. Functionally, involved in middle stages of meiosis. Redundant with SPS22 for the organization of the beta-glucan layer of the spore wall. In Saccharomyces cerevisiae (strain ATCC 204508 / S288c) (Baker's yeast), this protein is Sporulation-specific protein 2 (SPS2).